The primary structure comprises 128 residues: Large ribosomal subunit protein bL17 (128 aa).

It belongs to the bacterial ribosomal protein bL17 family. In terms of assembly, part of the 50S ribosomal subunit. Contacts protein L32.

In Histophilus somni (strain 129Pt) (Haemophilus somnus), this protein is Large ribosomal subunit protein bL17.